The sequence spans 757 residues: Xaa-Pro dipeptidyl-peptidase (757 aa).

Residues serine 348, aspartate 468, and histidine 498 each act as charge relay system in the active site.

This sequence belongs to the peptidase S15 family. As to quaternary structure, homodimer.

The protein resides in the cytoplasm. It catalyses the reaction Hydrolyzes Xaa-Pro-|- bonds to release unblocked, N-terminal dipeptides from substrates including Ala-Pro-|-p-nitroanilide and (sequentially) Tyr-Pro-|-Phe-Pro-|-Gly-Pro-|-Ile.. In terms of biological role, removes N-terminal dipeptides sequentially from polypeptides having unsubstituted N-termini provided that the penultimate residue is proline. In Streptococcus pneumoniae (strain ATCC BAA-255 / R6), this protein is Xaa-Pro dipeptidyl-peptidase.